The sequence spans 459 residues: Cysteine--tRNA ligase (459 aa).

Residue Cys28 coordinates Zn(2+). The 'HIGH' region motif lies at 30 to 40 (VTVYDLCHFGH). Residues Cys209, His234, and Glu238 each coordinate Zn(2+). The 'KMSKS' region signature appears at 266 to 270 (KMSKS). Lys269 is a binding site for ATP.

It belongs to the class-I aminoacyl-tRNA synthetase family. As to quaternary structure, monomer. Zn(2+) serves as cofactor.

The protein localises to the cytoplasm. The enzyme catalyses tRNA(Cys) + L-cysteine + ATP = L-cysteinyl-tRNA(Cys) + AMP + diphosphate. The sequence is that of Cysteine--tRNA ligase from Glaesserella parasuis serovar 5 (strain SH0165) (Haemophilus parasuis).